Here is a 126-residue protein sequence, read N- to C-terminus: Holo-[acyl-carrier-protein] synthase (126 aa).

Positions 9 and 58 each coordinate Mg(2+).

Belongs to the P-Pant transferase superfamily. AcpS family. Requires Mg(2+) as cofactor.

It localises to the cytoplasm. The enzyme catalyses apo-[ACP] + CoA = holo-[ACP] + adenosine 3',5'-bisphosphate + H(+). In terms of biological role, transfers the 4'-phosphopantetheine moiety from coenzyme A to a Ser of acyl-carrier-protein. The chain is Holo-[acyl-carrier-protein] synthase from Edwardsiella ictaluri (strain 93-146).